We begin with the raw amino-acid sequence, 348 residues long: Dihydroorotase (348 aa).

Zn(2+) is bound by residues His17 and His19. Residues 19-21 (HLR) and Asn45 each bind substrate. The Zn(2+) site is built by Lys103, His140, and His178. At Lys103 the chain carries N6-carboxylysine. A substrate-binding site is contributed by His140. Leu223 serves as a coordination point for substrate. Asp251 serves as a coordination point for Zn(2+). The active site involves Asp251. Residues His255 and Ala267 each contribute to the substrate site.

Belongs to the metallo-dependent hydrolases superfamily. DHOase family. Class II DHOase subfamily. In terms of assembly, homodimer. The cofactor is Zn(2+).

It carries out the reaction (S)-dihydroorotate + H2O = N-carbamoyl-L-aspartate + H(+). The protein operates within pyrimidine metabolism; UMP biosynthesis via de novo pathway; (S)-dihydroorotate from bicarbonate: step 3/3. Catalyzes the reversible cyclization of carbamoyl aspartate to dihydroorotate. In Salmonella arizonae (strain ATCC BAA-731 / CDC346-86 / RSK2980), this protein is Dihydroorotase.